Reading from the N-terminus, the 156-residue chain is Small ribosomal subunit protein uS7 (156 aa).

The protein belongs to the universal ribosomal protein uS7 family. Part of the 30S ribosomal subunit. Contacts proteins S9 and S11.

One of the primary rRNA binding proteins, it binds directly to 16S rRNA where it nucleates assembly of the head domain of the 30S subunit. Is located at the subunit interface close to the decoding center, probably blocks exit of the E-site tRNA. The sequence is that of Small ribosomal subunit protein uS7 from Synechococcus sp. (strain JA-3-3Ab) (Cyanobacteria bacterium Yellowstone A-Prime).